A 356-amino-acid polypeptide reads, in one-letter code: Glutamine synthetase nodule isozyme (356 aa).

Residues 19-99 (IIAEYIWVGG…VICDVYTPAG (81 aa)) enclose the GS beta-grasp domain. One can recognise a GS catalytic domain in the interval 106–356 (KRHNAAKIFS…IAETTLLWKP (251 aa)).

The protein belongs to the glutamine synthetase family. Homooctamer. In terms of tissue distribution, found at highest levels in root nodules.

The protein localises to the cytoplasm. It catalyses the reaction L-glutamate + NH4(+) + ATP = L-glutamine + ADP + phosphate + H(+). In Medicago sativa (Alfalfa), this protein is Glutamine synthetase nodule isozyme (GS1).